The sequence spans 546 residues: Probable E3 ubiquitin-protein ligase NGR_a03640 (546 aa).

A disordered region spans residues 1–70 (MNVQRPGLAV…RPWEGRPQEA (70 aa)). Positions 1–248 (MNVQRPGLAV…YAGPQIFLPM (248 aa)) are interaction with target proteins. A compositionally biased stretch (low complexity) spans 22–48 (SEPGSPAAAARWVEASTEAEASAASSS). Residues 58–67 (AEERPWEGRP) are compositionally biased toward basic and acidic residues. LRR repeat units lie at residues 104-125 (GLRR…LPGT), 126-144 (LLEL…DLPA), 145-166 (GLQR…LPAA), 167-186 (LEWL…MIPP), and 187-208 (ELIW…LLTQ). Residues 249–256 (GPVELARR) are linker. Positions 257-546 (PLHEVVADWL…KVLRGRGLEL (290 aa)) constitute an NEL domain. The tract at residues 257–546 (PLHEVVADWL…KVLRGRGLEL (290 aa)) is E3 ubiquitin-protein ligase catalytic domain. Cysteine 338 acts as the Glycyl thioester intermediate in catalysis.

It belongs to the LRR-containing bacterial E3 ligase family. Post-translationally, ubiquitinated in the presence of host E1 ubiquitin-activating enzyme, E2 ubiquitin-conjugating enzyme and ubiquitin.

Its subcellular location is the secreted. The protein localises to the host cytoplasm. In terms of biological role, effector proteins function to alter host cell physiology and promote bacterial survival in host tissues. This protein is an E3 ubiquitin ligase that interferes with host's ubiquitination pathway. This is Probable E3 ubiquitin-protein ligase NGR_a03640 from Sinorhizobium fredii (strain NBRC 101917 / NGR234).